We begin with the raw amino-acid sequence, 523 residues long: Xanthotoxin 5-hydroxylase CYP82C2 (523 aa).

A helical membrane pass occupies residues 1–21; it reads MDTSLFSLFVPILVFVFIALF. Cys462 serves as a coordination point for heme.

Belongs to the cytochrome P450 family. Requires heme as cofactor.

Its subcellular location is the membrane. The catalysed reaction is xanthotoxin + reduced [NADPH--hemoprotein reductase] + O2 = 5-hydroxyxanthotoxin + oxidized [NADPH--hemoprotein reductase] + H2O + 2 H(+). The enzyme catalyses indole-3-carbonyl nitrile + reduced [NADPH--hemoprotein reductase] + O2 = 4-hydroxy-indole-3-carbonyl nitrile + oxidized [NADPH--hemoprotein reductase] + H2O + H(+). Involved in the biosynthetic pathway to 4-hydroxyindole-3-carbonyl nitrile (4-OH-ICN), a cyanogenic metabolite required for inducible pathogen defense. Converts indole-3-carbonyl nitrile (ICN) into 4-OH-ICN. Can hydroxylate xanthotoxin (8-methoxypsoralen) to form 5-hydroxyxanthotoxin (5-hydroxy-8-methoxypsoralen) in vivo and in vitro. This chain is Xanthotoxin 5-hydroxylase CYP82C2, found in Arabidopsis thaliana (Mouse-ear cress).